The chain runs to 355 residues: MSGSTFGRVFRLTTYGESHGAGLGGVVDGCPAGIALTEAMIQAELDRRRPGQGGPAATARKEPDRVRLLSGVFEGRTTGTPVAFHVENTDQRSRDYGDIMHVYRPGHADVTYDAKYGRRDYRGGGRSSGRETLSRVAGGAVAQALLAECGITVNAFTVELGGVPARPEDPAGAQDRPFFAPEEDIVAQWDALVRNVKGRGDTVGGIVQVEAYGVPAGLGEPVFDRLDARLACALMSVGAVKGVEIGAGFAAARLTGSSNNDAMTARGYAGNNAGGILGGISSGQTVVARAAVKPIPSVAQEQHTVDDSGREVILRVGGRHDISAIPRIVPVLKAMTALTLADMLLMQRRMTAVRA.

Residue arginine 48 participates in NADP(+) binding. FMN is bound by residues arginine 126–serine 128, glycine 278, lysine 293–serine 297, and arginine 319.

The protein belongs to the chorismate synthase family. Homotetramer. FMNH2 is required as a cofactor.

The enzyme catalyses 5-O-(1-carboxyvinyl)-3-phosphoshikimate = chorismate + phosphate. Its pathway is metabolic intermediate biosynthesis; chorismate biosynthesis; chorismate from D-erythrose 4-phosphate and phosphoenolpyruvate: step 7/7. Functionally, catalyzes the anti-1,4-elimination of the C-3 phosphate and the C-6 proR hydrogen from 5-enolpyruvylshikimate-3-phosphate (EPSP) to yield chorismate, which is the branch point compound that serves as the starting substrate for the three terminal pathways of aromatic amino acid biosynthesis. This reaction introduces a second double bond into the aromatic ring system. The sequence is that of Chorismate synthase from Oleidesulfovibrio alaskensis (strain ATCC BAA-1058 / DSM 17464 / G20) (Desulfovibrio alaskensis).